Reading from the N-terminus, the 201-residue chain is Small ribosomal subunit protein uS4 (201 aa).

The interval 27 to 47 is disordered; that stretch reads SKKNYPPGQHGNSRKRKTSEY. Positions 92-152 constitute an S4 RNA-binding domain; it reads GRLDNVVYRL…EKSKSMEVIA (61 aa).

The protein belongs to the universal ribosomal protein uS4 family. As to quaternary structure, part of the 30S ribosomal subunit. Contacts protein S5. The interaction surface between S4 and S5 is involved in control of translational fidelity.

Functionally, one of the primary rRNA binding proteins, it binds directly to 16S rRNA where it nucleates assembly of the body of the 30S subunit. Its function is as follows. With S5 and S12 plays an important role in translational accuracy. This is Small ribosomal subunit protein uS4 from Parabacteroides distasonis (strain ATCC 8503 / DSM 20701 / CIP 104284 / JCM 5825 / NCTC 11152).